The chain runs to 1124 residues: PAN2-PAN3 deadenylation complex catalytic subunit PAN2 (1124 aa).

WD repeat units follow at residues 19–58 (IDNS…IPMP), 118–157 (PGFN…TTSF), 158–195 (NHTG…TVKS), and 309–348 (SSNT…SKNF). The tract at residues 351–484 (FPSYLEQPDF…EYKLSNKFEV (134 aa)) is linker. One can recognise a USP domain in the interval 484–861 (VPNCYSNLKI…KPIIVMYQLA (378 aa)). Residues 917–1091 (IAIDAEFVAL…EDANTALLLY (175 aa)) form the Exonuclease domain. A divalent metal cation contacts are provided by aspartate 920, glutamate 922, aspartate 1030, and aspartate 1083.

It belongs to the peptidase C19 family. PAN2 subfamily. Forms a heterotrimer with an asymmetric homodimer of the regulatory subunit PAN3 to form the poly(A)-nuclease (PAN) deadenylation complex. A divalent metal cation serves as cofactor.

It is found in the cytoplasm. It carries out the reaction Exonucleolytic cleavage of poly(A) to 5'-AMP.. Its activity is regulated as follows. Positively regulated by the regulatory subunit PAN3. Catalytic subunit of the poly(A)-nuclease (PAN) deadenylation complex, one of two cytoplasmic mRNA deadenylases involved in mRNA turnover. PAN specifically shortens poly(A) tails of RNA and the activity is stimulated by poly(A)-binding protein PAB1. PAN deadenylation is followed by rapid degradation of the shortened mRNA tails by the CCR4-NOT complex. Deadenylated mRNAs are then degraded by two alternative mechanisms, namely exosome-mediated 3'-5' exonucleolytic degradation, or deadenylation-dependent mRNA decaping and subsequent 5'-3' exonucleolytic degradation by XRN1. May also be involved in post-transcriptional maturation of mRNA poly(A) tails. The chain is PAN2-PAN3 deadenylation complex catalytic subunit PAN2 from Debaryomyces hansenii (strain ATCC 36239 / CBS 767 / BCRC 21394 / JCM 1990 / NBRC 0083 / IGC 2968) (Yeast).